We begin with the raw amino-acid sequence, 1138 residues long: Pesticidal crystal protein Cry7Ab (1138 aa).

Belongs to the delta endotoxin family.

Its function is as follows. Promotes colloidosmotic lysis by binding to the midgut epithelial cells of Coleoptera. The sequence is that of Pesticidal crystal protein Cry7Ab (cry7Ab) from Bacillus thuringiensis serovar kumamotoensis.